The chain runs to 155 residues: Large-conductance mechanosensitive channel (155 aa).

Transmembrane regions (helical) follow at residues V25 to L45 and G98 to V118.

It belongs to the MscL family. Homopentamer.

The protein localises to the cell inner membrane. Its function is as follows. Channel that opens in response to stretch forces in the membrane lipid bilayer. May participate in the regulation of osmotic pressure changes within the cell. The chain is Large-conductance mechanosensitive channel from Novosphingobium aromaticivorans (strain ATCC 700278 / DSM 12444 / CCUG 56034 / CIP 105152 / NBRC 16084 / F199).